We begin with the raw amino-acid sequence, 203 residues long: A-type ATP synthase subunit E (203 aa).

This sequence belongs to the V-ATPase E subunit family. Has multiple subunits with at least A(3), B(3), C, D, E, F, H, I and proteolipid K(x).

It is found in the cell membrane. Component of the A-type ATP synthase that produces ATP from ADP in the presence of a proton gradient across the membrane. The polypeptide is A-type ATP synthase subunit E (Thermococcus onnurineus (strain NA1)).